Here is a 68-residue protein sequence, read N- to C-terminus: Large ribosomal subunit protein bL35 (68 aa).

Belongs to the bacterial ribosomal protein bL35 family.

The protein is Large ribosomal subunit protein bL35 of Rickettsia akari (strain Hartford).